The primary structure comprises 609 residues: Glutamine--fructose-6-phosphate aminotransferase [isomerizing] (609 aa).

The active-site Nucleophile; for GATase activity is C2. The 218-residue stretch at 2 to 219 (CGIFGYIGAK…SGELAVVGLG (218 aa)) folds into the Glutamine amidotransferase type-2 domain. 2 consecutive SIS domains span residues 280-426 (ISEK…LKQT) and 458-599 (WAND…IDRP). The active-site For Fru-6P isomerization activity is K604.

In terms of assembly, homodimer.

Its subcellular location is the cytoplasm. It catalyses the reaction D-fructose 6-phosphate + L-glutamine = D-glucosamine 6-phosphate + L-glutamate. In terms of biological role, catalyzes the first step in hexosamine metabolism, converting fructose-6P into glucosamine-6P using glutamine as a nitrogen source. The polypeptide is Glutamine--fructose-6-phosphate aminotransferase [isomerizing] (Chlamydia caviae (strain ATCC VR-813 / DSM 19441 / 03DC25 / GPIC) (Chlamydophila caviae)).